Consider the following 420-residue polypeptide: Protein disulfide isomerase CRELD1 (420 aa).

The N-terminal stretch at 1–29 (MAPRSSRGIAPAMLCGLSLFLGFPGLVWV) is a signal peptide. The Extracellular segment spans residues 30-362 (QISVPPQSSP…GFFSEMTEDE (333 aa)). Positions 46–49 (CHTC) match the CXXC motif. Cystine bridges form between cysteine 46–cysteine 49, cysteine 155–cysteine 169, cysteine 163–cysteine 181, and cysteine 183–cysteine 192. An EGF-like 1 domain is found at 153 to 193 (LPCPGGAERPCGGYGHCEGEGTRGGSGHCDCQAGYGGEACG). Asparagine 205 carries an N-linked (GlcNAc...) asparagine glycan. FU repeat units follow at residues 208–255 (HLVC…ERAS) and 268–315 (SYEC…AVCP). The CXXC motif lies at 278–281 (CLGC). Intrachain disulfides connect cysteine 278/cysteine 281, cysteine 309/cysteine 321, cysteine 314/cysteine 330, and cysteine 332/cysteine 343. In terms of domain architecture, EGF-like 2; calcium-binding spans 305 to 344 (DVDECETAVCPGENQQCENTEGSYRCICADGYKQMEGICV). Residues 363-383 (LVVLQQMFFGVIICALATLAA) traverse the membrane as a helical segment. A topological domain (cytoplasmic) is located at residue lysine 384. The chain crosses the membrane as a helical span at residues 385–405 (GDLVFTAIFIGAVAAMTGYWL). Residues 406-420 (SERSDRVLEGFIKGR) are Extracellular-facing.

Belongs to the CRELD family.

The protein resides in the membrane. It catalyses the reaction Catalyzes the rearrangement of -S-S- bonds in proteins.. Protein disulfide isomerase. Promotes the localization of acetylcholine receptors (AChRs) to the plasma membrane. This chain is Protein disulfide isomerase CRELD1 (CRELD1), found in Bos taurus (Bovine).